We begin with the raw amino-acid sequence, 86 residues long: UPF0297 protein CA_C1679 (86 aa).

The protein belongs to the UPF0297 family.

This is UPF0297 protein CA_C1679 from Clostridium acetobutylicum (strain ATCC 824 / DSM 792 / JCM 1419 / IAM 19013 / LMG 5710 / NBRC 13948 / NRRL B-527 / VKM B-1787 / 2291 / W).